The primary structure comprises 591 residues: Potassium channel KAT4 (591 aa).

The Cytoplasmic segment spans residues 1–32; it reads MAARSELLRPAFGEASPSLGRFVINPHSCSYR. A helical transmembrane segment spans residues 33–53; sequence WWHMFLIMLVLYSAWASPFEL. Residues 54–63 are Extracellular-facing; sequence SMEKAASIAL. The helical transmembrane segment at 64–84 threads the bilayer; that stretch reads VVTDLVVDVFFAIDIALSFFV. Topologically, residues 85-109 are cytoplasmic; that stretch reads AYRDTSTGLLITDRRKITMRYLKRP. The chain crosses the membrane as a helical span at residues 110 to 130; it reads CFALDVASTIPLQIIYQLVTG. Residues 131–137 are Extracellular-facing; it reads KRQGLWG. Residues 138 to 158 traverse the membrane as a helical; Voltage-sensor segment; that stretch reads LLNLLRLWRLRRVSKLFARVE. Residues 159 to 172 lie on the Cytoplasmic side of the membrane; sequence KDIRFNYLWTRLIK. The helical transmembrane segment at 173 to 193 threads the bilayer; it reads LLCVTLFALHFAACIYLWMAF. The Extracellular portion of the chain corresponds to 194 to 220; that stretch reads NYKIKELTWIGSQIHSFEDRSVWFCYT. An intramembrane region (pore-forming) is located at residues 221-240; it reads CAVYWSITTLATVGYGDLHA. Residues 241-246 lie on the Extracellular side of the membrane; it reads TNIGEM. The helical transmembrane segment at 247–267 threads the bilayer; that stretch reads LFSIAFMLFNMGLTSYIIGNI. Residues 268–591 are Cytoplasmic-facing; sequence TNLVVRETSN…IRDGDHLLFS (324 aa). 349 to 469 serves as a coordination point for a nucleoside 3',5'-cyclic phosphate; that stretch reads LFQGVSDSLI…YIVFSNFIQY (121 aa). A KHA domain is found at 521 to 591; sequence RVVIHEQLPN…IRDGDHLLFS (71 aa).

This sequence belongs to the potassium channel family. Plant (TC 1.A.1.4) subfamily.

It is found in the membrane. Probable inward-rectifying potassium channel. Assuming opened or closed conformations in response to the voltage difference across the membrane, the channel is activated by hyperpolarization. This is Potassium channel KAT4 from Oryza sativa subsp. japonica (Rice).